The primary structure comprises 359 residues: Protein Wnt-5b (359 aa).

A signal peptide spans Met1–Ala17. Cys83 and Cys94 form a disulfide bridge. Residues Asn93 and Asn99 are each glycosylated (N-linked (GlcNAc...) asparagine). 10 disulfide bridges follow: Cys133–Cys141, Cys143–Cys161, Cys217–Cys231, Cys219–Cys226, Cys288–Cys319, Cys304–Cys314, Cys318–Cys358, Cys334–Cys349, Cys336–Cys346, and Cys341–Cys342. Ser223 carries O-palmitoleoyl serine; by PORCN lipidation. Asn291 and Asn305 each carry an N-linked (GlcNAc...) asparagine glycan.

It belongs to the Wnt family. Interacts with PORCN. In terms of processing, palmitoleoylation is required for efficient binding to frizzled receptors. Depalmitoleoylation leads to Wnt signaling pathway inhibition.

It is found in the secreted. Its subcellular location is the extracellular space. The protein resides in the extracellular matrix. Functionally, ligand for members of the frizzled family of seven transmembrane receptors. Probable developmental protein. May be a signaling molecule which affects the development of discrete regions of tissues. Is likely to signal over only few cell diameters. The chain is Protein Wnt-5b (Wnt5b) from Mus musculus (Mouse).